The following is an 827-amino-acid chain: Leucine--tRNA ligase (827 aa).

The 'HIGH' region signature appears at 42–52 (PYPSGKLHMGH). The 'KMSKS' region signature appears at 583–587 (KMSKS). K586 contributes to the ATP binding site.

It belongs to the class-I aminoacyl-tRNA synthetase family.

It is found in the cytoplasm. It catalyses the reaction tRNA(Leu) + L-leucine + ATP = L-leucyl-tRNA(Leu) + AMP + diphosphate. The chain is Leucine--tRNA ligase from Pelotomaculum thermopropionicum (strain DSM 13744 / JCM 10971 / SI).